Reading from the N-terminus, the 275-residue chain is NH(3)-dependent NAD(+) synthetase (275 aa).

46–53 (GISGGQDS) contacts ATP. D52 is a binding site for Mg(2+). R140 serves as a coordination point for deamido-NAD(+). T160 is an ATP binding site. E165 is a Mg(2+) binding site. Deamido-NAD(+)-binding residues include K173 and D180. K189 and T211 together coordinate ATP. 260–261 (HK) contributes to the deamido-NAD(+) binding site.

Belongs to the NAD synthetase family. In terms of assembly, homodimer.

The catalysed reaction is deamido-NAD(+) + NH4(+) + ATP = AMP + diphosphate + NAD(+) + H(+). The protein operates within cofactor biosynthesis; NAD(+) biosynthesis; NAD(+) from deamido-NAD(+) (ammonia route): step 1/1. Functionally, catalyzes the ATP-dependent amidation of deamido-NAD to form NAD. Uses ammonia as a nitrogen source. The sequence is that of NH(3)-dependent NAD(+) synthetase from Escherichia coli O8 (strain IAI1).